Consider the following 270-residue polypeptide: Formamidopyrimidine-DNA glycosylase (270 aa).

Residue proline 2 is the Schiff-base intermediate with DNA of the active site. Catalysis depends on glutamate 3, which acts as the Proton donor. The Proton donor; for beta-elimination activity role is filled by lysine 58. The DNA site is built by histidine 91, arginine 110, and arginine 151. The segment at 236 to 270 (AVYGREGEPCTHCGAPLQGVRIGGRATIYCSQCQR) adopts an FPG-type zinc-finger fold. The active-site Proton donor; for delta-elimination activity is the arginine 260.

Belongs to the FPG family. As to quaternary structure, monomer. Zn(2+) serves as cofactor.

The enzyme catalyses Hydrolysis of DNA containing ring-opened 7-methylguanine residues, releasing 2,6-diamino-4-hydroxy-5-(N-methyl)formamidopyrimidine.. It catalyses the reaction 2'-deoxyribonucleotide-(2'-deoxyribose 5'-phosphate)-2'-deoxyribonucleotide-DNA = a 3'-end 2'-deoxyribonucleotide-(2,3-dehydro-2,3-deoxyribose 5'-phosphate)-DNA + a 5'-end 5'-phospho-2'-deoxyribonucleoside-DNA + H(+). Involved in base excision repair of DNA damaged by oxidation or by mutagenic agents. Acts as a DNA glycosylase that recognizes and removes damaged bases. Has a preference for oxidized purines, such as 7,8-dihydro-8-oxoguanine (8-oxoG). Has AP (apurinic/apyrimidinic) lyase activity and introduces nicks in the DNA strand. Cleaves the DNA backbone by beta-delta elimination to generate a single-strand break at the site of the removed base with both 3'- and 5'-phosphates. The polypeptide is Formamidopyrimidine-DNA glycosylase (Acidithiobacillus ferrooxidans (strain ATCC 23270 / DSM 14882 / CIP 104768 / NCIMB 8455) (Ferrobacillus ferrooxidans (strain ATCC 23270))).